The chain runs to 353 residues: Nicotinate-nucleotide--dimethylbenzimidazole phosphoribosyltransferase (353 aa).

The Proton acceptor role is filled by E319.

It belongs to the CobT family.

It carries out the reaction 5,6-dimethylbenzimidazole + nicotinate beta-D-ribonucleotide = alpha-ribazole 5'-phosphate + nicotinate + H(+). The protein operates within nucleoside biosynthesis; alpha-ribazole biosynthesis; alpha-ribazole from 5,6-dimethylbenzimidazole: step 1/2. Functionally, catalyzes the synthesis of alpha-ribazole-5'-phosphate from nicotinate mononucleotide (NAMN) and 5,6-dimethylbenzimidazole (DMB). The protein is Nicotinate-nucleotide--dimethylbenzimidazole phosphoribosyltransferase of Syntrophobacter fumaroxidans (strain DSM 10017 / MPOB).